The chain runs to 318 residues: Ribose-phosphate pyrophosphokinase 2 (318 aa).

96–101 (RQDKKD) is a binding site for ATP. Residues Asp-128, His-130, Asp-139, and Asp-143 each contribute to the Mg(2+) site. Residue His-130 coordinates ATP. The interval 212–227 (KDRVAILVDDMADTCG) is binding of phosphoribosylpyrophosphate.

Belongs to the ribose-phosphate pyrophosphokinase family. In terms of assembly, homodimer. The active form is probably a hexamer composed of 3 homodimers. It depends on Mg(2+) as a cofactor.

The enzyme catalyses D-ribose 5-phosphate + ATP = 5-phospho-alpha-D-ribose 1-diphosphate + AMP + H(+). Its pathway is metabolic intermediate biosynthesis; 5-phospho-alpha-D-ribose 1-diphosphate biosynthesis; 5-phospho-alpha-D-ribose 1-diphosphate from D-ribose 5-phosphate (route I): step 1/1. Activated by magnesium and inorganic phosphate. Competitively or non-competitively inhibited by ADP, 2,3-bisphosphoglyceride or GDP. Its function is as follows. Catalyzes the synthesis of phosphoribosylpyrophosphate (PRPP) that is essential for nucleotide synthesis. The polypeptide is Ribose-phosphate pyrophosphokinase 2 (prps2) (Xenopus tropicalis (Western clawed frog)).